The primary structure comprises 403 residues: F-box protein At1g60400 (403 aa).

The region spanning 13-59 is the F-box domain; the sequence is IDRLSALPEHLLCRILSELSTKDSVRTSVLSKHWRNLWLHVPVLELE.

The polypeptide is F-box protein At1g60400 (Arabidopsis thaliana (Mouse-ear cress)).